The sequence spans 623 residues: Xaa-Pro aminopeptidase 1 (623 aa).

An a peptide-binding site is contributed by Arg77. Lys304 is modified (N6-acetyllysine). An a peptide-binding site is contributed by His395. Mn(2+) is bound by residues Asp415, Asp426, and His489. His489, His498, and Glu523 together coordinate a peptide. Mn(2+) contacts are provided by Glu523 and Glu537.

Belongs to the peptidase M24B family. As to quaternary structure, homodimer. Mn(2+) serves as cofactor. In terms of tissue distribution, expressed in all tissues tested, including liver, adrenal decapsular tissue, adrenal capsular tissue, corpus luteum, testis, submandibular gland, thymus, brain, cerebellum and heart. Highest levels in testis.

The protein resides in the cytoplasm. The catalysed reaction is Release of any N-terminal amino acid, including proline, that is linked to proline, even from a dipeptide or tripeptide.. Its activity is regulated as follows. Inhibited by inositol hexakisphosphate. Metalloaminopeptidase that catalyzes the removal of a penultimate prolyl residue from the N-termini of peptides, such as Arg-Pro-Pro. Contributes to the degradation of bradykinin. This Rattus norvegicus (Rat) protein is Xaa-Pro aminopeptidase 1.